The following is a 963-amino-acid chain: Ubiquitin carboxyl-terminal hydrolase 4 (963 aa).

In terms of domain architecture, DUSP spans 11 to 122 (PDAETQKSEL…GQQPIVRKVV (112 aa)). The segment at 27–216 (TLQRGAQWYL…LYLGQVLVIE (190 aa)) is necessary for interaction with SART3. The Nuclear export signal motif lies at 133–141 (VEVYLLELK). A Ubiquitin-like 1 domain is found at 142 to 226 (LCENSDPTNV…PQNEDGTWPR (85 aa)). The interval 220–255 (EDGTWPRQTLQSKSSTAPSRNFTTSPKSSASPYSSV) is disordered. Polar residues predominate over residues 225 to 243 (PRQTLQSKSSTAPSRNFTT). Residues 229 to 295 (LQSKSSTAPS…SYNCQEPPSS (67 aa)) form a required for USP4 activation by providing conformational flexibility between the DUSP and catalytic domains region. Low complexity predominate over residues 244–255 (SPKSSASPYSSV). In terms of domain architecture, USP spans 302 to 923 (CGLGNLGNTC…AAYVLFYQRR (622 aa)). Catalysis depends on cysteine 311, which acts as the Nucleophile. The tract at residues 384–386 (PQF) is regulates ubiquitin dissociation. Positions 405–407 (LHE) are necessary for interaction with RBL2. Serine 445 carries the phosphoserine modification. The necessary for interaction with RB1 and RBL2 stretch occupies residues 459–463 (LVCPE). The Zn(2+) site is built by cysteine 461 and cysteine 464. The Ubiquitin-like 2 domain maps to 483–571 (LKKDRVMEVF…IFVYEVCSTS (89 aa)). An interacts with DUSP and ubiquitin-like 1 domains and is required for USP4 activation region spans residues 485-775 (KDRVMEVFLV…LQPQKKKKTT (291 aa)). Residues 637-698 (DEFGSSPLEP…PSETTQKKIK (62 aa)) form a disordered region. Serine 655 bears the Phosphoserine mark. The segment covering 657–666 (EGEDEEEMEH) has biased composition (acidic residues). A phosphoserine mark is found at serine 675 and serine 680. A Nuclear localization signal motif is present at residues 767 to 772 (QPQKKK). The Zn(2+) site is built by cysteine 799 and cysteine 802. Histidine 881 (proton acceptor) is an active-site residue. A disordered region spans residues 928–963 (YKTPSLSSSGSSDGGTRPSSSQQGLGDDEACSMDTN). The segment covering 932 to 948 (SLSSSGSSDGGTRPSSS) has biased composition (low complexity). Over residues 953–963 (GDDEACSMDTN) the composition is skewed to acidic residues.

It belongs to the peptidase C19 family. USP4 subfamily. Interacts with RB1 (both dephosphorylated and hypophosphorylated forms). Interacts with RBL1 and RBL2. Interacts with ADORA2A (via cytoplasmic C-terminus); the interaction is direct. Interacts with SART3; recruits USP4 to its substrate PRPF3. Phosphorylated at Ser-445 by PKB/AKT1 in response to EGF stimulus, promoting its ability deubiquitinate RHEB. Post-translationally, monoubiquitinated by TRIM21. Ubiquitination does not lead to its proteasomal degradation. Autodeubiquitinated.

It localises to the cytoplasm. Its subcellular location is the nucleus. It catalyses the reaction Thiol-dependent hydrolysis of ester, thioester, amide, peptide and isopeptide bonds formed by the C-terminal Gly of ubiquitin (a 76-residue protein attached to proteins as an intracellular targeting signal).. With respect to regulation, the completion of the deubiquitinase reaction is mediated by the DUSP and ubiquitin-like 1 domains which promotes the release of ubiquitin from the catalytic site enabling subsequent reactions to occur. Deubiquitinating enzyme that removes conjugated ubiquitin from target proteins. Deubiquitinates PDPK1. Deubiquitinates TRIM21. Deubiquitinates receptor ADORA2A which increases the amount of functional receptor at the cell surface. Deubiquitinates HAS2. Deubiquitinates RHEB in response to EGF signaling, promoting mTORC1 signaling. May regulate mRNA splicing through deubiquitination of the U4 spliceosomal protein PRPF3. This may prevent its recognition by the U5 component PRPF8 thereby destabilizing interactions within the U4/U6.U5 snRNP. May also play a role in the regulation of quality control in the ER. The polypeptide is Ubiquitin carboxyl-terminal hydrolase 4 (USP4) (Pongo abelii (Sumatran orangutan)).